Reading from the N-terminus, the 396-residue chain is Homoserine O-acetyltransferase (396 aa).

The AB hydrolase-1 domain maps to asparagine 53 to glutamate 370. The active-site Nucleophile is the serine 158. Arginine 228 contributes to the substrate binding site. Catalysis depends on residues aspartate 331 and histidine 364. Aspartate 365 is a binding site for substrate.

It belongs to the AB hydrolase superfamily. MetX family. Homodimer.

It is found in the cytoplasm. The enzyme catalyses L-homoserine + acetyl-CoA = O-acetyl-L-homoserine + CoA. It functions in the pathway amino-acid biosynthesis; L-methionine biosynthesis via de novo pathway; O-acetyl-L-homoserine from L-homoserine: step 1/1. In terms of biological role, transfers an acetyl group from acetyl-CoA to L-homoserine, forming acetyl-L-homoserine. The chain is Homoserine O-acetyltransferase from Gluconobacter oxydans (strain 621H) (Gluconobacter suboxydans).